The following is a 250-amino-acid chain: Triosephosphate isomerase (250 aa).

9 to 11 (NWK) serves as a coordination point for substrate. H94 serves as the catalytic Electrophile. The active-site Proton acceptor is the E166. Substrate contacts are provided by residues G172, S212, and 233–234 (GG).

This sequence belongs to the triosephosphate isomerase family. Homodimer.

It is found in the cytoplasm. It catalyses the reaction D-glyceraldehyde 3-phosphate = dihydroxyacetone phosphate. Its pathway is carbohydrate biosynthesis; gluconeogenesis. It functions in the pathway carbohydrate degradation; glycolysis; D-glyceraldehyde 3-phosphate from glycerone phosphate: step 1/1. Involved in the gluconeogenesis. Catalyzes stereospecifically the conversion of dihydroxyacetone phosphate (DHAP) to D-glyceraldehyde-3-phosphate (G3P). This Thermus thermophilus (strain ATCC 27634 / DSM 579 / HB8) protein is Triosephosphate isomerase.